The following is an 87-amino-acid chain: Kappa-5-bungarotoxin (87 aa).

The first 21 residues, 1-21, serve as a signal peptide directing secretion; sequence MKTLLLTLVVVTIVCLDLGYT. Intrachain disulfides connect Cys-24–Cys-42, Cys-35–Cys-63, Cys-48–Cys-52, Cys-67–Cys-79, and Cys-80–Cys-85.

Belongs to the three-finger toxin family. Long-chain subfamily. Kappa-neurotoxin sub-subfamily. As to quaternary structure, homo- and heterodimer; non-covalently linked. As to expression, expressed by the venom gland.

It localises to the secreted. Its function is as follows. Postsynaptic neurotoxin that binds and inhibits neuronal nicotinic acetylcholine receptors (nAChR) with high affinity (IC(50)&lt;100 nM). Is a selective, and slowly reversible antagonist of alpha-3/CHRNA3-containing and some alpha-4/CHRNA4-containing AChRs. The sequence is that of Kappa-5-bungarotoxin from Bungarus multicinctus (Many-banded krait).